The sequence spans 348 residues: Phenylalanine--tRNA ligase alpha subunit (348 aa).

Residue Glu-259 participates in Mg(2+) binding.

It belongs to the class-II aminoacyl-tRNA synthetase family. Phe-tRNA synthetase alpha subunit type 1 subfamily. As to quaternary structure, tetramer of two alpha and two beta subunits. Mg(2+) serves as cofactor.

It localises to the cytoplasm. The enzyme catalyses tRNA(Phe) + L-phenylalanine + ATP = L-phenylalanyl-tRNA(Phe) + AMP + diphosphate + H(+). The protein is Phenylalanine--tRNA ligase alpha subunit of Levilactobacillus brevis (strain ATCC 367 / BCRC 12310 / CIP 105137 / JCM 1170 / LMG 11437 / NCIMB 947 / NCTC 947) (Lactobacillus brevis).